The following is a 791-amino-acid chain: Phosphoenolpyruvate synthase (791 aa).

At T416 the chain carries Phosphothreonine. H418 serves as the catalytic Tele-phosphohistidine intermediate. Residues R508, R575, E677, G698, S699, N700, and D701 each coordinate substrate. Mg(2+) is bound at residue E677. D701 lines the Mg(2+) pocket. Y744 bears the Phosphotyrosine mark. C748 serves as the catalytic Proton donor.

This sequence belongs to the PEP-utilizing enzyme family. Mg(2+) is required as a cofactor.

It carries out the reaction pyruvate + ATP + H2O = phosphoenolpyruvate + AMP + phosphate + 2 H(+). The protein operates within carbohydrate biosynthesis; gluconeogenesis. Its function is as follows. Catalyzes the phosphorylation of pyruvate to phosphoenolpyruvate. This chain is Phosphoenolpyruvate synthase (ppsA), found in Pseudomonas aeruginosa (strain UCBPP-PA14).